A 119-amino-acid chain; its full sequence is Fluoride-specific ion channel FluC 2 (119 aa).

The next 4 helical transmembrane spans lie at 1–21, 33–53, 56–76, and 93–113; these read MITV…RYGI, FPYA…FIFS, FSPF…TTFS, and VFTL…FLGY. Positions 70 and 73 each coordinate Na(+).

Belongs to the fluoride channel Fluc/FEX (TC 1.A.43) family.

The protein resides in the cell membrane. It carries out the reaction fluoride(in) = fluoride(out). With respect to regulation, na(+) is not transported, but it plays an essential structural role and its presence is essential for fluoride channel function. Fluoride-specific ion channel. Important for reducing fluoride concentration in the cell, thus reducing its toxicity. This Lactobacillus johnsonii (strain CNCM I-12250 / La1 / NCC 533) protein is Fluoride-specific ion channel FluC 2.